The following is a 161-amino-acid chain: S-ribosylhomocysteine lyase (161 aa).

Fe cation-binding residues include histidine 57, histidine 61, and cysteine 124.

It belongs to the LuxS family. In terms of assembly, homodimer. Fe cation is required as a cofactor.

The catalysed reaction is S-(5-deoxy-D-ribos-5-yl)-L-homocysteine = (S)-4,5-dihydroxypentane-2,3-dione + L-homocysteine. Its function is as follows. Involved in the synthesis of autoinducer 2 (AI-2) which is secreted by bacteria and is used to communicate both the cell density and the metabolic potential of the environment. The regulation of gene expression in response to changes in cell density is called quorum sensing. Catalyzes the transformation of S-ribosylhomocysteine (RHC) to homocysteine (HC) and 4,5-dihydroxy-2,3-pentadione (DPD). This Macrococcus caseolyticus (strain JCSC5402) (Macrococcoides caseolyticum) protein is S-ribosylhomocysteine lyase.